The sequence spans 354 residues: N-acetyl-gamma-glutamyl-phosphate reductase (354 aa).

The active site involves Cys-156.

This sequence belongs to the NAGSA dehydrogenase family. Type 1 subfamily.

The protein resides in the cytoplasm. It catalyses the reaction N-acetyl-L-glutamate 5-semialdehyde + phosphate + NADP(+) = N-acetyl-L-glutamyl 5-phosphate + NADPH + H(+). It participates in amino-acid biosynthesis; L-arginine biosynthesis; N(2)-acetyl-L-ornithine from L-glutamate: step 3/4. In terms of biological role, catalyzes the NADPH-dependent reduction of N-acetyl-5-glutamyl phosphate to yield N-acetyl-L-glutamate 5-semialdehyde. The sequence is that of N-acetyl-gamma-glutamyl-phosphate reductase from Bordetella pertussis (strain Tohama I / ATCC BAA-589 / NCTC 13251).